A 683-amino-acid polypeptide reads, in one-letter code: Methionine--tRNA ligase (683 aa).

Positions 14-24 (PYANGSIHLGH) match the 'HIGH' region motif. Residues C145, C148, C158, and C161 each contribute to the Zn(2+) site. The short motif at 331-335 (KMSKS) is the 'KMSKS' region element. ATP is bound at residue K334. In terms of domain architecture, tRNA-binding spans 581 to 683 (AFAAVDLRVA…SGAKPGQRIK (103 aa)).

The protein belongs to the class-I aminoacyl-tRNA synthetase family. MetG type 1 subfamily. In terms of assembly, homodimer. Requires Zn(2+) as cofactor.

It is found in the cytoplasm. The catalysed reaction is tRNA(Met) + L-methionine + ATP = L-methionyl-tRNA(Met) + AMP + diphosphate. Its function is as follows. Is required not only for elongation of protein synthesis but also for the initiation of all mRNA translation through initiator tRNA(fMet) aminoacylation. The protein is Methionine--tRNA ligase of Pseudomonas fluorescens (strain SBW25).